Consider the following 550-residue polypeptide: Probable importin subunit alpha-A (550 aa).

Over residues 1 to 30 the composition is skewed to basic and acidic residues; sequence MSSRDKQDSRKKEFKKSLDSETARRKREEN. Positions 1 to 34 are disordered; sequence MSSRDKQDSRKKEFKKSLDSETARRKREENSIGI. Residues 1–56 enclose the IBB domain; the sequence is MSSRDKQDSRKKEFKKSLDSETARRKREENSIGIRKNAREELMLKRRGIVQPNPST. 8 ARM repeats span residues 116–155, 158–198, 201–241, 256–297, 300–339, 342–381, 385–424, and 428–467; these read YPPIDQVIECGIIPKLNQLLQCNNPKVQFESAWALTNIAS, NRQT…NIAG, VDSR…KIGL, KPQP…YLCD, NTKIQAVIDSGVVPRLVKLLEYPDSIVFTPALRAVGNIVT, SSQTQIVIDNNGVELITRLLAVQKKSIRKESCWALSNITA, SQIDVVVSNPKTVTTLISLLSHSEHDIKREACWALSNSTN, and TKSIQTLVRHNILKHFIDLLNSQDLVILKIVLEGLINIIK.

The protein belongs to the importin alpha family. As to quaternary structure, forms a complex with tnpo/importin subunit beta.

The protein resides in the cytoplasm. It is found in the nucleus envelope. Functions in nuclear protein import via a substrate-importin alpha-beta transport complex that passes though the nuclear pore complexes (NPC). Binds specifically and directly to substrates containing either a simple or bipartite NLS motif. The sequence is that of Probable importin subunit alpha-A from Dictyostelium discoideum (Social amoeba).